The primary structure comprises 130 residues: MKDWLDEIKWNSDGLVPAIAQDHKTGRVLMMAWMNRESLALTAAEQRAIYWSRSRGKLWRKGEESGHVQKLHELRLDCDADVIILMVEQLGHIACHTGRESCFYRVYEDGQWKIVDPVLKDPDAIYSAGH.

Asp77 contributes to the Mg(2+) binding site. Cys78 is a binding site for Zn(2+). Residues Asp79 and Asp81 each coordinate Mg(2+). Zn(2+) is bound by residues Cys95 and Cys102.

Belongs to the PRA-CH family. Homodimer. Mg(2+) serves as cofactor. Requires Zn(2+) as cofactor.

It is found in the cytoplasm. It carries out the reaction 1-(5-phospho-beta-D-ribosyl)-5'-AMP + H2O = 1-(5-phospho-beta-D-ribosyl)-5-[(5-phospho-beta-D-ribosylamino)methylideneamino]imidazole-4-carboxamide. It functions in the pathway amino-acid biosynthesis; L-histidine biosynthesis; L-histidine from 5-phospho-alpha-D-ribose 1-diphosphate: step 3/9. In terms of biological role, catalyzes the hydrolysis of the adenine ring of phosphoribosyl-AMP. The chain is Phosphoribosyl-AMP cyclohydrolase from Pseudomonas putida (strain ATCC 700007 / DSM 6899 / JCM 31910 / BCRC 17059 / LMG 24140 / F1).